The following is a 392-amino-acid chain: Formate-dependent phosphoribosylglycinamide formyltransferase (392 aa).

Residues 22 to 23 (EL) and glutamate 82 each bind N(1)-(5-phospho-beta-D-ribosyl)glycinamide. Residues arginine 114, lysine 155, 160–165 (SSGKGQ), 195–198 (EGVV), and glutamate 203 contribute to the ATP site. The region spanning 119–308 (RLAAEELGLP…EFALHVRAFL (190 aa)) is the ATP-grasp domain. Positions 267 and 279 each coordinate Mg(2+). N(1)-(5-phospho-beta-D-ribosyl)glycinamide is bound by residues aspartate 286, lysine 355, and 362-363 (RR).

The protein belongs to the PurK/PurT family. In terms of assembly, homodimer.

It carries out the reaction N(1)-(5-phospho-beta-D-ribosyl)glycinamide + formate + ATP = N(2)-formyl-N(1)-(5-phospho-beta-D-ribosyl)glycinamide + ADP + phosphate + H(+). The protein operates within purine metabolism; IMP biosynthesis via de novo pathway; N(2)-formyl-N(1)-(5-phospho-D-ribosyl)glycinamide from N(1)-(5-phospho-D-ribosyl)glycinamide (formate route): step 1/1. Involved in the de novo purine biosynthesis. Catalyzes the transfer of formate to 5-phospho-ribosyl-glycinamide (GAR), producing 5-phospho-ribosyl-N-formylglycinamide (FGAR). Formate is provided by PurU via hydrolysis of 10-formyl-tetrahydrofolate. In Salmonella schwarzengrund (strain CVM19633), this protein is Formate-dependent phosphoribosylglycinamide formyltransferase.